The primary structure comprises 36 residues: Peruvianin-1 (36 aa).

This sequence belongs to the germin family. As to quaternary structure, homohexamer, possibly consisting of a trimer of dimers. Post-translationally, glycosylated.

Its activity is regulated as follows. Inhibited by iodoacetamide and trans-epoxysuccinyl-L-leucylamido(4-guanidino)butane (E-64) but not by phenylmethylsulfonyl fluoride (PMSF), pepstatin-A, ethylenediamine tetra acetic acid (EDTA) or ethylene glycol tetraacetic acid (EGTA). In terms of biological role, cysteine protease able to degrade azocasein and benzoyl-arginine-beta-naphtylamide (BANA) in vitro. This Thevetia peruviana (Yellow oleander) protein is Peruvianin-1.